A 509-amino-acid polypeptide reads, in one-letter code: Zinc finger CCCH-type with G patch domain-containing protein (509 aa).

The C3H1-type zinc-finger motif lies at 155–178 (PCNYYLEGECRFDEIRCRYSHGAL). The disordered stretch occupies residues 253-277 (EEDGLTSEDSSSSPHDESSDEIDSD). In terms of domain architecture, G-patch spans 310–356 (TRGIGSKLMEKMGYIHGTGLGSEGRGIVTPVSAQILPQGRSLDACME). Positions 409 to 430 (GGESRHQGDQAAKKAKTNDLQQ) are disordered. Positions 411–420 (ESRHQGDQAA) are enriched in basic and acidic residues.

It localises to the nucleus. Transcription repressor. This chain is Zinc finger CCCH-type with G patch domain-containing protein, found in Drosophila persimilis (Fruit fly).